The primary structure comprises 68 residues: Erythrodihydroneopterin triphosphate synthetase (68 aa).

A Phosphoserine modification is found at serine 66.

The chain is Erythrodihydroneopterin triphosphate synthetase from Cavia porcellus (Guinea pig).